Here is a 406-residue protein sequence, read N- to C-terminus: Nuclear hormone receptor family member nhr-133 (406 aa).

The segment at residues 8-83 (SGPCEICEQP…VGMNSSKFQN (76 aa)) is a DNA-binding region (nuclear receptor). The segment at 11–31 (CEICEQPAHGNHFGVLSCRAC) adopts an NR C4-type zinc-finger fold. An NR C4-type; degenerate zinc finger spans residues 47–66 (DRVCRKGNCIGNDLYRCKIC). Positions 150-406 (YSWSPNHYPN…YSHPEMFEFS (257 aa)) constitute an NR LBD domain.

It belongs to the nuclear hormone receptor family.

The protein localises to the nucleus. Orphan nuclear receptor. The chain is Nuclear hormone receptor family member nhr-133 from Caenorhabditis elegans.